Consider the following 476-residue polypeptide: Aspartyl/glutamyl-tRNA(Asn/Gln) amidotransferase subunit B (476 aa).

Belongs to the GatB/GatE family. GatB subfamily. Heterotrimer of A, B and C subunits.

It carries out the reaction L-glutamyl-tRNA(Gln) + L-glutamine + ATP + H2O = L-glutaminyl-tRNA(Gln) + L-glutamate + ADP + phosphate + H(+). It catalyses the reaction L-aspartyl-tRNA(Asn) + L-glutamine + ATP + H2O = L-asparaginyl-tRNA(Asn) + L-glutamate + ADP + phosphate + 2 H(+). Functionally, allows the formation of correctly charged Asn-tRNA(Asn) or Gln-tRNA(Gln) through the transamidation of misacylated Asp-tRNA(Asn) or Glu-tRNA(Gln) in organisms which lack either or both of asparaginyl-tRNA or glutaminyl-tRNA synthetases. The reaction takes place in the presence of glutamine and ATP through an activated phospho-Asp-tRNA(Asn) or phospho-Glu-tRNA(Gln). The polypeptide is Aspartyl/glutamyl-tRNA(Asn/Gln) amidotransferase subunit B (Lactobacillus acidophilus (strain ATCC 700396 / NCK56 / N2 / NCFM)).